The sequence spans 100 residues: NADH-quinone oxidoreductase subunit K 1 (100 aa).

3 helical membrane-spanning segments follow: residues 4 to 24, 29 to 49, and 60 to 80; these read LHSYLIVSAILFSIGTIGVLV, IVIFMCVEMMLNAVNLTFIAL, and IFVFFVMTVAAAEAAVGLALM.

It belongs to the complex I subunit 4L family. In terms of assembly, NDH-1 is composed of 14 different subunits. Subunits NuoA, H, J, K, L, M, N constitute the membrane sector of the complex.

The protein resides in the cell inner membrane. It catalyses the reaction a quinone + NADH + 5 H(+)(in) = a quinol + NAD(+) + 4 H(+)(out). In terms of biological role, NDH-1 shuttles electrons from NADH, via FMN and iron-sulfur (Fe-S) centers, to quinones in the respiratory chain. The immediate electron acceptor for the enzyme in this species is believed to be ubiquinone. Couples the redox reaction to proton translocation (for every two electrons transferred, four hydrogen ions are translocated across the cytoplasmic membrane), and thus conserves the redox energy in a proton gradient. The polypeptide is NADH-quinone oxidoreductase subunit K 1 (Geobacter sulfurreducens (strain ATCC 51573 / DSM 12127 / PCA)).